A 270-amino-acid polypeptide reads, in one-letter code: PspA protein (270 aa).

Residues 238-270 are disordered; the sequence is MRGEALPAGGTTATPRPATETSGGAIAEQPYGQ. Over residues 240–258 the composition is skewed to low complexity; the sequence is GEALPAGGTTATPRPATET.

Belongs to the PspA/Vipp/IM30 family.

It localises to the cytoplasm. Its function is as follows. Involved in resistance to stress. Associates with and regulates lipid droplets (LDs) homeostasis under conditions of stress and may regulate non-replicating persistence (NRP). Could be involved in preservation of envelope integrity and tolerance to surface stress. In Mycobacterium tuberculosis (strain ATCC 25177 / H37Ra), this protein is PspA protein.